A 283-amino-acid chain; its full sequence is Diaminopimelate epimerase (283 aa).

Substrate is bound by residues N13, Q46, and N66. Catalysis depends on C75, which acts as the Proton donor. Substrate-binding positions include 76 to 77 (GN), N166, N199, and 217 to 218 (ER). The active-site Proton acceptor is C226. A substrate-binding site is contributed by 227 to 228 (GT).

It belongs to the diaminopimelate epimerase family. Homodimer.

The protein localises to the cytoplasm. It carries out the reaction (2S,6S)-2,6-diaminopimelate = meso-2,6-diaminopimelate. It participates in amino-acid biosynthesis; L-lysine biosynthesis via DAP pathway; DL-2,6-diaminopimelate from LL-2,6-diaminopimelate: step 1/1. Its function is as follows. Catalyzes the stereoinversion of LL-2,6-diaminopimelate (L,L-DAP) to meso-diaminopimelate (meso-DAP), a precursor of L-lysine and an essential component of the bacterial peptidoglycan. The polypeptide is Diaminopimelate epimerase (Herminiimonas arsenicoxydans).